The following is a 260-amino-acid chain: Small ribosomal subunit protein eS4 (260 aa).

An S4 RNA-binding domain is found at 46 to 111; the sequence is VPLLILVRDM…RYRVVMNEHH (66 aa).

Belongs to the eukaryotic ribosomal protein eS4 family.

The polypeptide is Small ribosomal subunit protein eS4 (Methanopyrus kandleri (strain AV19 / DSM 6324 / JCM 9639 / NBRC 100938)).